The following is a 287-amino-acid chain: MNGGPSGFNNAPVTKAFVIATALFTVFFGIRGGSSKLGLSYQDIFEKFRIWKLIISAFAFSSTTQLLSGLYLLYFFRVFERQIGSNKYSVFIFFSGFVSLILETILLSLTKDPTANLLTSGPYALVFASFVPFFLDIPVTKRFGVLGVHFSDKSFIYLAGVQLLLSSWKRSIFTGICGIIAGSLYRLNIFGIRKAKFPEFMASLFSRFSLPSLSSHSQPPRRTSPNLGRQAVRAYRAPMPSTTEPSEEAIATLVSMGFDQNAARQALVHARNDVNAATNILLEAHSH.

6 helical membrane-spanning segments follow: residues 10 to 30 (NAPV…FFGI), 53 to 73 (LIIS…LYLL), 90 to 110 (VFIF…LSLT), 117 to 137 (LLTS…FLDI), 145 to 165 (VLGV…QLLL), and 172 to 192 (IFTG…IFGI). The 41-residue stretch at 244–284 (EPSEEAIATLVSMGFDQNAARQALVHARNDVNAATNILLEA) folds into the UBA domain.

Belongs to the peptidase S54 family.

The protein localises to the membrane. Its function is as follows. Probable rhomboid-type serine protease that catalyzes intramembrane proteolysis. The protein is Rhomboid-like protein 18 of Arabidopsis thaliana (Mouse-ear cress).